A 309-amino-acid chain; its full sequence is GTP cyclohydrolase MptA (309 aa).

Belongs to the GTP cyclohydrolase IV family. In terms of assembly, homodimer. The cofactor is Fe(2+).

The catalysed reaction is GTP + H2O = 7,8-dihydroneopterin 2',3'-cyclic phosphate + formate + diphosphate + H(+). The protein operates within cofactor biosynthesis; 5,6,7,8-tetrahydromethanopterin biosynthesis. In terms of biological role, converts GTP to 7,8-dihydro-D-neopterin 2',3'-cyclic phosphate, the first intermediate in the biosynthesis of coenzyme methanopterin. The polypeptide is GTP cyclohydrolase MptA (Methanococcus aeolicus (strain ATCC BAA-1280 / DSM 17508 / OCM 812 / Nankai-3)).